Consider the following 154-residue polypeptide: Large ribosomal subunit protein uL23 (154 aa).

This sequence belongs to the universal ribosomal protein uL23 family.

In terms of biological role, this protein binds to a specific region on the 26S rRNA. In Fritillaria agrestis (Stinkbells), this protein is Large ribosomal subunit protein uL23 (RPL23A).